Reading from the N-terminus, the 133-residue chain is ATP synthase epsilon chain (133 aa).

This sequence belongs to the ATPase epsilon chain family. In terms of assembly, F-type ATPases have 2 components, CF(1) - the catalytic core - and CF(0) - the membrane proton channel. CF(1) has five subunits: alpha(3), beta(3), gamma(1), delta(1), epsilon(1). CF(0) has three main subunits: a, b and c.

Its subcellular location is the cell membrane. Produces ATP from ADP in the presence of a proton gradient across the membrane. This chain is ATP synthase epsilon chain, found in Bacillus cytotoxicus (strain DSM 22905 / CIP 110041 / 391-98 / NVH 391-98).